A 137-amino-acid chain; its full sequence is NADPH-dependent 7-cyano-7-deazaguanine reductase (137 aa).

The active-site Thioimide intermediate is cysteine 51. The Proton donor role is filled by aspartate 58. Substrate-binding positions include 73-75 (VEL) and 92-93 (HE).

Belongs to the GTP cyclohydrolase I family. QueF type 1 subfamily.

It localises to the cytoplasm. The catalysed reaction is 7-aminomethyl-7-carbaguanine + 2 NADP(+) = 7-cyano-7-deazaguanine + 2 NADPH + 3 H(+). Its pathway is tRNA modification; tRNA-queuosine biosynthesis. Catalyzes the NADPH-dependent reduction of 7-cyano-7-deazaguanine (preQ0) to 7-aminomethyl-7-deazaguanine (preQ1). In Gloeobacter violaceus (strain ATCC 29082 / PCC 7421), this protein is NADPH-dependent 7-cyano-7-deazaguanine reductase.